Reading from the N-terminus, the 1940-residue chain is Protein ORF1940 (1940 aa).

TPR repeat units follow at residues 119-153, 155-186, 480-513, and 617-652; these read IKAC…ALQY, FQSL…LQQI, RLPD…GLHG, and GKSM…SPTS. Disordered stretches follow at residues 1160–1239 and 1519–1571; these read PSKV…PGAV and KGPS…TVTS. Low complexity predominate over residues 1164-1185; that stretch reads QNTTQPSATQNTTTQPTAQNTS. Positions 1186 to 1200 are enriched in polar residues; the sequence is LPGATQNTTLPTPSK. Composition is skewed to low complexity over residues 1201–1235, 1521–1539, and 1561–1571; these read VQNT…NTSL, PSTT…MTPP, and TPGSGSQTVTS. Residues 1691 to 1724 form a TPR 5 repeat; the sequence is KDLNKSVGTSVVEEAKYNSTLQTYLAGLGIKDLN. Positions 1862–1940 are disordered; that stretch reads TTTHHITPPP…AEQAEQVLLI (79 aa). Residues 1868-1883 show a composition bias toward pro residues; the sequence is TPPPPPPPPPPPPPPK. The segment covering 1884 to 1894 has biased composition (low complexity); that stretch reads TQTITTTTQIT. A compositionally biased stretch (pro residues) spans 1895–1912; sequence PPSPPPTPPPPPPPPKSP.

In Acidianus convivator (ATV), this protein is Protein ORF1940.